The sequence spans 406 residues: MASNDKGLEEIPEGQIESNYDEITDSFDAMDLKPELLRGVYAYGFERPSAIQQRAILPIIKGNDVIAQAQSGTGKTATFSISALQKLDPNVKGCQALILAPTRELAQQIQKVVVAIGDFMNIECHACIGGTNVREDMKALQEGPQVVVGTPGRVQDMIQRRVLRTDNLKMFILDEADEMLSRGFTEQIYDIFQLLPQSTQVVLLSATMPQDVLEVTTKFMRDPVRILVKKQELTLEGIKQFYIAVEKEEWKLDTLSDLYETVTITQAVIFCNTRRKVDWLTDKLTARDFTVSAMHGDMEQAQRDVIMKEFRSGSSRVLIATDLLARGIDVQQVSLVINYDLPANRENYIHRIGRGGRFGRKGVAINFVTADDVRMMREIEQFYSTQIEEMPMNVAGKFNHVDISLD.

Residues 25–53 (DSFDAMDLKPELLRGVYAYGFERPSAIQQ) carry the Q motif motif. The 171-residue stretch at 56-226 (ILPIIKGNDV…TKFMRDPVRI (171 aa)) folds into the Helicase ATP-binding domain. 69-76 (AQSGTGKT) contributes to the ATP binding site. The short motif at 174 to 177 (DEAD) is the DEAD box element. A Helicase C-terminal domain is found at 237-398 (GIKQFYIAVE…EMPMNVAGKF (162 aa)).

The protein belongs to the DEAD box helicase family. eIF4A subfamily. In terms of assembly, component of the eIF4F complex, which composition varies with external and internal environmental conditions. It is composed of at least eIF4A, eIF4E and eIF4G.

It is found in the cytoplasm. The catalysed reaction is ATP + H2O = ADP + phosphate + H(+). In terms of biological role, ATP-dependent RNA helicase which is a subunit of the eIF4F complex involved in cap recognition and is required for mRNA binding to ribosome. In the current model of translation initiation, eIF4A unwinds RNA secondary structures in the 5'-UTR of mRNAs which is necessary to allow efficient binding of the small ribosomal subunit, and subsequent scanning for the initiator codon. The chain is ATP-dependent RNA helicase eIF4A (tif1) from Aspergillus fumigatus (strain ATCC MYA-4609 / CBS 101355 / FGSC A1100 / Af293) (Neosartorya fumigata).